The primary structure comprises 352 residues: DNA integrity scanning protein DisA (352 aa).

The region spanning 3-143 (DERIVLALKS…FKYSLSEVSV (141 aa)) is the DAC domain. Residues Gly70, Leu88, and 101–105 (IRHRT) contribute to the ATP site.

It belongs to the DisA family. In terms of assembly, homooctamer. Requires Mg(2+) as cofactor.

The enzyme catalyses 2 ATP = 3',3'-c-di-AMP + 2 diphosphate. In terms of biological role, participates in a DNA-damage check-point that is active prior to asymmetric division when DNA is damaged. DisA forms globular foci that rapidly scan along the chromosomes during sporulation, searching for lesions. When a lesion is present, DisA pauses at the lesion site. This triggers a cellular response that culminates in a temporary block in sporulation initiation. Also has diadenylate cyclase activity, catalyzing the condensation of 2 ATP molecules into cyclic di-AMP (c-di-AMP). c-di-AMP acts as a signaling molecule that couples DNA integrity with progression of sporulation. The rise in c-di-AMP level generated by DisA while scanning the chromosome, operates as a positive signal that advances sporulation; upon encountering a lesion, the DisA focus arrests at the damaged site and halts c-di-AMP synthesis. This is DNA integrity scanning protein DisA from Carboxydothermus hydrogenoformans (strain ATCC BAA-161 / DSM 6008 / Z-2901).